The sequence spans 170 residues: Disulfide bond formation protein B (170 aa).

Residues 1–14 (MNDSTLALRRERRL) are Cytoplasmic-facing. Residues 15-31 (LMLLGWVCIALLAGALY) form a helical membrane-spanning segment. The Periplasmic portion of the chain corresponds to 32 to 49 (LQYVKNEDPCPLCIIQRY). Cys-41 and Cys-44 are oxidised to a cystine. Residues 50 to 64 (FFAAIGIFAFLAAGI) form a helical membrane-spanning segment. At 65–71 (RNWRVIW) the chain is on the cytoplasmic side. Residues 72–89 (VFELLIAIAAAGGVGTAA) traverse the membrane as a helical segment. The Periplasmic segment spans residues 90 to 144 (RHLSIQMNPGFSCGFDTLQPIVDSLPPAQWFPGMFKVAGLCETVYPPIFGILLPG). Cys-102 and Cys-130 are joined by a disulfide. Residues 145 to 163 (WALIGFAVILVAVASSLWR) form a helical membrane-spanning segment. At 164–170 (HRRKLAG) the chain is on the cytoplasmic side.

It belongs to the DsbB family.

It localises to the cell inner membrane. Required for disulfide bond formation in some periplasmic proteins. Acts by oxidizing the DsbA protein. This chain is Disulfide bond formation protein B, found in Burkholderia ambifaria (strain ATCC BAA-244 / DSM 16087 / CCUG 44356 / LMG 19182 / AMMD) (Burkholderia cepacia (strain AMMD)).